The chain runs to 300 residues: Tyrosine recombinase XerC (300 aa).

The region spanning 2-88 (TQEGKLEQQF…SLRSFYTFLL (87 aa)) is the Core-binding (CB) domain. The region spanning 109 to 294 (RLPKFFYSEE…TKEHLKSTYM (186 aa)) is the Tyr recombinase domain. Active-site residues include arginine 150, lysine 174, histidine 246, arginine 249, and histidine 272. Tyrosine 281 acts as the O-(3'-phospho-DNA)-tyrosine intermediate in catalysis.

The protein belongs to the 'phage' integrase family. XerC subfamily. Forms a cyclic heterotetrameric complex composed of two molecules of XerC and two molecules of XerD.

The protein resides in the cytoplasm. Its function is as follows. Site-specific tyrosine recombinase, which acts by catalyzing the cutting and rejoining of the recombining DNA molecules. The XerC-XerD complex is essential to convert dimers of the bacterial chromosome into monomers to permit their segregation at cell division. It also contributes to the segregational stability of plasmids. In Listeria monocytogenes serotype 4a (strain HCC23), this protein is Tyrosine recombinase XerC.